Reading from the N-terminus, the 513-residue chain is Dye-decolorizing peroxidase msp1 (513 aa).

A signal peptide spans 1 to 20; it reads MKLFSASVFAAIIASHYASA. Positions 21-55 are excised as a propeptide; the sequence is TAHIRAPNVKPRRTNSLLTAPPQQPPLPSAQQAAS. The tract at residues 33–52 is disordered; it reads RTNSLLTAPPQQPPLPSAQQ. Aspartate 228 acts as the Proton acceptor in catalysis. Histidine 365 contacts heme.

Homodimer. Heme b serves as cofactor.

It localises to the secreted. The catalysed reaction is Reactive Blue 5 + 2 H2O2 = 2,2'-disulfonyl azobenzene + 3-[(4-amino-6-chloro-1,3,5-triazin-2-yl)amino]benzenesulfonate + phthalate + 2 H2O + 2 H(+). It catalyses the reaction 2 a phenolic donor + H2O2 = 2 a phenolic radical donor + 2 H2O. Its function is as follows. Manganese-independent peroxidase that is able to convert a large number of compounds, but its physiological substrate is not known. In addition to classic peroxidase substrates (e.g. 2,6-dimethoxyphenol), oxidizes dyes such as Reactive Blue 5. Also degrades beta-carotene. The sequence is that of Dye-decolorizing peroxidase msp1 from Mycetinis scorodonius (Garlic mushroom).